Reading from the N-terminus, the 64-residue chain is Large ribosomal subunit protein uL29 (64 aa).

The protein belongs to the universal ribosomal protein uL29 family.

This chain is Large ribosomal subunit protein uL29, found in Solidesulfovibrio magneticus (strain ATCC 700980 / DSM 13731 / RS-1) (Desulfovibrio magneticus).